The following is a 587-amino-acid chain: 2-succinyl-5-enolpyruvyl-6-hydroxy-3-cyclohexene-1-carboxylate synthase (587 aa).

This sequence belongs to the TPP enzyme family. MenD subfamily. As to quaternary structure, homodimer. The cofactor is Mg(2+). Mn(2+) is required as a cofactor. It depends on thiamine diphosphate as a cofactor.

The catalysed reaction is isochorismate + 2-oxoglutarate + H(+) = 5-enolpyruvoyl-6-hydroxy-2-succinyl-cyclohex-3-ene-1-carboxylate + CO2. Its pathway is quinol/quinone metabolism; 1,4-dihydroxy-2-naphthoate biosynthesis; 1,4-dihydroxy-2-naphthoate from chorismate: step 2/7. The protein operates within cofactor biosynthesis; phylloquinone biosynthesis. Catalyzes the thiamine diphosphate-dependent decarboxylation of 2-oxoglutarate and the subsequent addition of the resulting succinic semialdehyde-thiamine pyrophosphate anion to isochorismate to yield 2-succinyl-5-enolpyruvyl-6-hydroxy-3-cyclohexene-1-carboxylate (SEPHCHC). This is 2-succinyl-5-enolpyruvyl-6-hydroxy-3-cyclohexene-1-carboxylate synthase from Prochlorococcus marinus (strain MIT 9215).